Here is a 411-residue protein sequence, read N- to C-terminus: Isocitrate dehydrogenase [NADP] peroxisomal (411 aa).

NADP(+)-binding positions include 78–80 (TIT) and arginine 85. Threonine 80 is a substrate binding site. Residues 97-103 (SPNGTLR), arginine 112, and arginine 135 contribute to the substrate site. Aspartate 254 is a binding site for Mn(2+). Lysine 262 lines the NADP(+) pocket. Aspartate 277 contacts Mn(2+). Residues 312-317 (GTVTRH) and asparagine 330 each bind NADP(+).

The protein belongs to the isocitrate and isopropylmalate dehydrogenases family. Mg(2+) is required as a cofactor. It depends on Mn(2+) as a cofactor.

Its subcellular location is the peroxisome. The catalysed reaction is D-threo-isocitrate + NADP(+) = 2-oxoglutarate + CO2 + NADPH. May play a role in N-alkane metabolism, glutamate synthesis, and/or NADPH generation in the peroxisomes. The sequence is that of Isocitrate dehydrogenase [NADP] peroxisomal (IDP2) from Candida tropicalis (Yeast).